The following is a 283-amino-acid chain: Bifunctional protein FolD (283 aa).

NADP(+) contacts are provided by residues G165–S167, S190, and V231.

It belongs to the tetrahydrofolate dehydrogenase/cyclohydrolase family. As to quaternary structure, homodimer.

The enzyme catalyses (6R)-5,10-methylene-5,6,7,8-tetrahydrofolate + NADP(+) = (6R)-5,10-methenyltetrahydrofolate + NADPH. It catalyses the reaction (6R)-5,10-methenyltetrahydrofolate + H2O = (6R)-10-formyltetrahydrofolate + H(+). It functions in the pathway one-carbon metabolism; tetrahydrofolate interconversion. Catalyzes the oxidation of 5,10-methylenetetrahydrofolate to 5,10-methenyltetrahydrofolate and then the hydrolysis of 5,10-methenyltetrahydrofolate to 10-formyltetrahydrofolate. The protein is Bifunctional protein FolD of Bacillus velezensis (strain DSM 23117 / BGSC 10A6 / LMG 26770 / FZB42) (Bacillus amyloliquefaciens subsp. plantarum).